Reading from the N-terminus, the 322-residue chain is Cytochrome c biogenesis protein CcsA (322 aa).

8 helical membrane-spanning segments follow: residues 9-29 (ILTH…LITL), 44-64 (GMIA…IYSG), 71-91 (LYES…VPYF), 98-118 (LTTI…SGLL), 143-163 (MILS…LLVI), 226-246 (VISL…VWAN), 253-273 (WSWD…AIYL), and 287-307 (AIVA…VNLL).

Belongs to the CcmF/CycK/Ccl1/NrfE/CcsA family. In terms of assembly, may interact with Ccs1.

It localises to the plastid. Its subcellular location is the chloroplast thylakoid membrane. Required during biogenesis of c-type cytochromes (cytochrome c6 and cytochrome f) at the step of heme attachment. The polypeptide is Cytochrome c biogenesis protein CcsA (Guizotia abyssinica (Niger)).